A 118-amino-acid polypeptide reads, in one-letter code: Deoxynogalonate monooxygenase (118 aa).

The ABM domain occupies 14–100 (VTFVNRFTVH…ALSTSEHGLF (87 aa)).

As to quaternary structure, homodimer.

It catalyses the reaction deoxynogalonate + O2 = nogalonate + H2O + H(+). It participates in antibiotic biosynthesis. Involved in the biosynthesis of the anthracycline (aromatic polyketide) antibiotic nogalamycin. Catalyzes the oxygenation of 12-deoxy-nogalonic acid at position 12 to yield nogalonic acid. The polypeptide is Deoxynogalonate monooxygenase (Streptomyces nogalater).